We begin with the raw amino-acid sequence, 352 residues long: tRNA pseudouridine synthase D (352 aa).

D78 (nucleophile) is an active-site residue. The TRUD domain occupies 153-299 (GVPNYYGEQR…LDQDRRPLLL (147 aa)).

It belongs to the pseudouridine synthase TruD family.

It catalyses the reaction uridine(13) in tRNA = pseudouridine(13) in tRNA. Functionally, responsible for synthesis of pseudouridine from uracil-13 in transfer RNAs. This chain is tRNA pseudouridine synthase D, found in Aeromonas salmonicida (strain A449).